The following is a 107-amino-acid chain: MTEAWRYSAQGISVALRVTPRGGRDDIDGLETLANGRTVVKVRVRAIAEGGEANRAVTELLAKALGVPKRAVRVLSGTTSRLKQVAVDGDPNELGEALRKLTAPKPD.

It belongs to the UPF0235 family.

The chain is UPF0235 protein RPC_0058 from Rhodopseudomonas palustris (strain BisB18).